Consider the following 308-residue polypeptide: Transaldolase (308 aa).

Residue Lys-125 is the Schiff-base intermediate with substrate of the active site.

The protein belongs to the transaldolase family. Type 1 subfamily. As to quaternary structure, homodimer.

The protein localises to the cytoplasm. It carries out the reaction D-sedoheptulose 7-phosphate + D-glyceraldehyde 3-phosphate = D-erythrose 4-phosphate + beta-D-fructose 6-phosphate. It functions in the pathway carbohydrate degradation; pentose phosphate pathway; D-glyceraldehyde 3-phosphate and beta-D-fructose 6-phosphate from D-ribose 5-phosphate and D-xylulose 5-phosphate (non-oxidative stage): step 2/3. Functionally, transaldolase is important for the balance of metabolites in the pentose-phosphate pathway. The sequence is that of Transaldolase from Pseudomonas putida (strain GB-1).